A 187-amino-acid chain; its full sequence is NADH-quinone oxidoreductase subunit C 2 (187 aa).

Positions 153 to 187 (YKDKLNPFGAEGPPPTQPDLATRDIPQGRPSTPES) are disordered.

Belongs to the complex I 30 kDa subunit family. As to quaternary structure, NDH-1 is composed of 14 different subunits. Subunits NuoB, C, D, E, F, and G constitute the peripheral sector of the complex.

Its subcellular location is the cell inner membrane. The catalysed reaction is a quinone + NADH + 5 H(+)(in) = a quinol + NAD(+) + 4 H(+)(out). NDH-1 shuttles electrons from NADH, via FMN and iron-sulfur (Fe-S) centers, to quinones in the respiratory chain. The immediate electron acceptor for the enzyme in this species is believed to be ubiquinone. Couples the redox reaction to proton translocation (for every two electrons transferred, four hydrogen ions are translocated across the cytoplasmic membrane), and thus conserves the redox energy in a proton gradient. This is NADH-quinone oxidoreductase subunit C 2 from Rhizobium etli (strain CIAT 652).